Reading from the N-terminus, the 525-residue chain is Glucose-6-phosphate isomerase (525 aa).

Catalysis depends on Glu356, which acts as the Proton donor. Catalysis depends on residues His387 and Lys502.

It belongs to the GPI family.

Its subcellular location is the cytoplasm. It carries out the reaction alpha-D-glucose 6-phosphate = beta-D-fructose 6-phosphate. It functions in the pathway carbohydrate biosynthesis; gluconeogenesis. It participates in carbohydrate degradation; glycolysis; D-glyceraldehyde 3-phosphate and glycerone phosphate from D-glucose: step 2/4. Catalyzes the reversible isomerization of glucose-6-phosphate to fructose-6-phosphate. This is Glucose-6-phosphate isomerase from Treponema denticola (strain ATCC 35405 / DSM 14222 / CIP 103919 / JCM 8153 / KCTC 15104).